Reading from the N-terminus, the 195-residue chain is Myelin-associated neurite-outgrowth inhibitor (195 aa).

At 1 to 18 the chain is on the cytoplasmic side; that stretch reads MNPVYSPGSSGVPYANAK. A helical transmembrane segment spans residues 19-43; the sequence is GIGYPAGFPMGYAAAAPAYSPNMYA. Over 44-143 the chain is Extracellular; it reads GPNPAFQPGY…APIPQPRGNG (100 aa). Residues 144–162 form a helical membrane-spanning segment; it reads VAMGMVAGTTMAMSAGTLL. The Cytoplasmic portion of the chain corresponds to 163–195; it reads TSHYPTPVAPHQVTMPTYRPPGTPTYSYVPPQW.

Belongs to the FAM168 family.

Its subcellular location is the cytoplasm. The protein localises to the perinuclear region. It is found in the cell membrane. It localises to the cell projection. The protein resides in the axon. Its function is as follows. Inhibitor of neuronal axonal outgrowth. This is Myelin-associated neurite-outgrowth inhibitor (fam168b) from Xenopus tropicalis (Western clawed frog).